Consider the following 216-residue polypeptide: 3-isopropylmalate dehydratase small subunit (216 aa).

The protein belongs to the LeuD family. LeuD type 1 subfamily. As to quaternary structure, heterodimer of LeuC and LeuD.

It catalyses the reaction (2R,3S)-3-isopropylmalate = (2S)-2-isopropylmalate. It participates in amino-acid biosynthesis; L-leucine biosynthesis; L-leucine from 3-methyl-2-oxobutanoate: step 2/4. Its function is as follows. Catalyzes the isomerization between 2-isopropylmalate and 3-isopropylmalate, via the formation of 2-isopropylmaleate. The protein is 3-isopropylmalate dehydratase small subunit of Burkholderia ambifaria (strain MC40-6).